The following is a 642-amino-acid chain: MSTGAQSKAVVAGQHADGPRLLADVGGTNARFALETGPGEITQIRVYPGADYPTITDAIRKYLKDVKISRVNHAAIAIANPVDGDQVTMTNHDWSFSIEATRRALGFDTLLVVNDFTALAMALPGLTDAQRVQVGGGARRQNSVIGLLGPGTGLGVSGLIPADDRWIALGSEGGHASFAPQDEREDLVLQYARKKFPHVSFERVCAGPGMEIIYRALAARDKKRVAATVDTVEIVERAHAGDALALETVECFCGILGAFAGSVALTLGALGGVYIGGGVALKLGELFTRSSFRARFEAKGRFTHYLENIPTYLITAEYPAFLGVSAILAEQLSNRSGGASSAVFERIRQMRDALTPAERRVADLALNHPRSIINDPIVDIARKADVSQPTVIRFCRSLGCQGLSDFKLKLATGLTGTIPMSHSQVHLGDTATDFGAKVLDNTVSAILQLREHLNFEHVENAIEILNGARRIEFYGLGNSNIVAQDAHYKFFRFGIPTIAYGDLYMQAASAALLGKGDVIVAVSKSGRAPELLRVLDVAMQAGAKVIAITSSNTPLAKRATVALETDHIEMRESQLSMISRILHLLMIDILAVGVAIRRASTNGELPEAVAQAKARASDDETADVLDWLSHGASPAAKDVARD.

The tract at residues 1–340 (MSTGAQSKAV…QLSNRSGGAS (340 aa)) is glucokinase. 23-28 (ADVGGT) serves as a coordination point for ATP. The region spanning 341 to 417 (SAVFERIRQM…LKLATGLTGT (77 aa)) is the HTH rpiR-type domain. Residues 341–642 (SAVFERIRQM…SPAAKDVARD (302 aa)) are putative HTH-type transcriptional regulator. Residues 377-396 (IVDIARKADVSQPTVIRFCR) constitute a DNA-binding region (H-T-H motif). The 140-residue stretch at 461–600 (AIEILNGARR…AVGVAIRRAS (140 aa)) folds into the SIS domain. The chain crosses the membrane as a helical span at residues 576–596 (SMISRILHLLMIDILAVGVAI).

It in the N-terminal section; belongs to the bacterial glucokinase family.

It localises to the membrane. The enzyme catalyses D-glucose + ATP = D-glucose 6-phosphate + ADP + H(+). The polypeptide is Bifunctional protein glk (glk) (Burkholderia orbicola (strain AU 1054)).